The chain runs to 298 residues: Bifunctional protein FolD (298 aa).

Residues 165 to 167 (GRS), Ser-190, and Ile-231 contribute to the NADP(+) site.

The protein belongs to the tetrahydrofolate dehydrogenase/cyclohydrolase family. In terms of assembly, homodimer.

The catalysed reaction is (6R)-5,10-methylene-5,6,7,8-tetrahydrofolate + NADP(+) = (6R)-5,10-methenyltetrahydrofolate + NADPH. It carries out the reaction (6R)-5,10-methenyltetrahydrofolate + H2O = (6R)-10-formyltetrahydrofolate + H(+). It participates in one-carbon metabolism; tetrahydrofolate interconversion. Its function is as follows. Catalyzes the oxidation of 5,10-methylenetetrahydrofolate to 5,10-methenyltetrahydrofolate and then the hydrolysis of 5,10-methenyltetrahydrofolate to 10-formyltetrahydrofolate. The chain is Bifunctional protein FolD from Prochlorococcus marinus (strain MIT 9301).